The sequence spans 871 residues: Protein translocase subunit SecA (871 aa).

ATP contacts are provided by residues Gln80, 98-102 (GEGKT), and Asp537.

It belongs to the SecA family. Monomer and homodimer. Part of the essential Sec protein translocation apparatus which comprises SecA, SecYEG and auxiliary proteins SecDF. Other proteins may also be involved. A single SecA monomer interacts with SecY in the channel.

It is found in the cell inner membrane. It localises to the cytoplasm. The enzyme catalyses ATP + H2O + cellular proteinSide 1 = ADP + phosphate + cellular proteinSide 2.. In terms of biological role, part of the Sec protein translocase complex. Interacts with the SecYEG preprotein conducting channel. Has a central role in coupling the hydrolysis of ATP to the transfer of proteins into and across the cell membrane, serving as an ATP-driven molecular motor driving the stepwise translocation of polypeptide chains across the membrane. This is Protein translocase subunit SecA from Thermotoga maritima (strain ATCC 43589 / DSM 3109 / JCM 10099 / NBRC 100826 / MSB8).